We begin with the raw amino-acid sequence, 514 residues long: Cytochrome P450 monooxygenase verB (514 aa).

Residues 5–25 (WLSASVLITAVILLVDYLNYY) traverse the membrane as a helical segment. Cys457 is a binding site for heme.

It belongs to the cytochrome P450 family. The cofactor is heme.

The protein localises to the membrane. The protein operates within mycotoxin biosynthesis. Functionally, cytochrome P450 monooxygenase; part of the gene cluster that mediates the biosynthesis of 11'-deoxyverticillin A, one of the dimeric epipolythiodioxopiperazines (ETPs) from the verticillin family that act as mycotoxins. 11'-deoxyverticillin A is required for normal conidiation. The nonribosomal peptide synthetase verP is speculated to be responsible for condensation of amino acids to form the carbon skeleton of verticillin, whereas the cluster-specific tailoring enzymes are involved in further modifications leading to the production of 11'-deoxyverticillin A. In Clonostachys rogersoniana, this protein is Cytochrome P450 monooxygenase verB.